The chain runs to 351 residues: Methylxanthine N1-demethylase NdmA (351 aa).

The region spanning 17 to 125 (WHPVCTVTEL…CEERYGLIWI (109 aa)) is the Rieske domain. [2Fe-2S] cluster is bound by residues Cys62, His64, Cys81, and His84.

[2Fe-2S] cluster serves as cofactor.

The enzyme catalyses caffeine + NADH + O2 + H(+) = theobromine + formaldehyde + NAD(+) + H2O. It catalyses the reaction caffeine + NADPH + O2 + H(+) = theobromine + formaldehyde + NADP(+) + H2O. It carries out the reaction theophylline + NADH + O2 + H(+) = 3-methylxanthine + formaldehyde + NAD(+) + H2O. The catalysed reaction is theophylline + NADPH + O2 + H(+) = 3-methylxanthine + formaldehyde + NADP(+) + H2O. The enzyme catalyses 1,7-dimethylxanthine + NADH + O2 + H(+) = 7-methylxanthine + formaldehyde + NAD(+) + H2O. It catalyses the reaction 1,7-dimethylxanthine + NADPH + O2 + H(+) = 7-methylxanthine + formaldehyde + NADP(+) + H2O. Its pathway is alkaloid degradation. In terms of biological role, involved in the caffeine degradation, which is the essential first step for assimilating the carbon and nitrogen in caffeine. Catalyzes the N1-demethylation of caffeine to produce theobromine and formaldehyde. Also catalyzes the N1-demethylation of theophylline, paraxanthine, and 1-methylxanthine to 3-methylxanthine, 7-methylxanthine, and xanthine, respectively. NADH is the preferred substrate. In Pseudomonas putida (Arthrobacter siderocapsulatus), this protein is Methylxanthine N1-demethylase NdmA (ndmA).